Consider the following 2510-residue polypeptide: Highly reducing polyketide synthase g433 (2510 aa).

Positions 1–54 are disordered; the sequence is MAPGRTDVTVAENGNGLHTAHNGVSNGTSNGTNGTSHTSNGTNSSAKTTSNGVH. Positions 22-45 are enriched in low complexity; it reads NGVSNGTSNGTNGTSHTSNGTNSS. The Ketosynthase family 3 (KS3) domain maps to 58–477; it reads DIPIAIVGMG…GANAHAVIDS (420 aa). Catalysis depends on for beta-ketoacyl synthase activity residues Cys229, His365, and His400. Positions 574–880 are malonyl-CoA:ACP transacylase (MAT) domain; that stretch reads FVFTGQGAQW…VPTLVRGQND (307 aa). Residues 942-1070 form an N-terminal hotdog fold region; it reads HDLLGCQVFE…GQVKAGRADS (129 aa). The interval 942-1226 is dehydratase (DH) domain; the sequence is HDLLGCQVFE…NLRLAPAADD (285 aa). Positions 942-1229 constitute a PKS/mFAS DH domain; sequence HDLLGCQVFE…LAPAADDTGG (288 aa). His974 functions as the Proton acceptor; for dehydratase activity in the catalytic mechanism. The segment at 1083 to 1229 is C-terminal hotdog fold; sequence PRKVSSTRWY…LAPAADDTGG (147 aa). Asp1144 serves as the catalytic Proton donor; for dehydratase activity. Residues 1395–1574 are methyltransferase (CMet) domain; the sequence is DFLGLVSHDK…FDGAEAVIYD (180 aa). The tract at residues 1787–2097 is enoyl reductase (ER) (ER) domain; the sequence is GSLKTLRWVQ…KGQHMGKLVI (311 aa). Residues 2122-2296 are ketoreductase (KR) domain; it reads SYLLVGGLGG…ASVLDISIIE (175 aa). Positions 2419–2496 constitute a Carrier domain; it reads SSVSFLANEI…KLGEAAAEGL (78 aa). Ser2456 carries the O-(pantetheine 4'-phosphoryl)serine modification.

Its pathway is mycotoxin biosynthesis. In terms of biological role, highly reducing polyketide synthase; part of the gene cluster that mediates the biosynthesis of 1233A, a natural compound known as an inhibitor of HMG-CoA synthase in the mevalonate pathway and with antibacterial and antifungal activities. The highly reducing polyketide synthase g433 gene is responsible for the 1233A backbone biosynthesis and the cytochrome P450 monooxygenase g430 catalyzes oxidation of the backbone. This chain is Highly reducing polyketide synthase g433, found in Fusarium sp.